The primary structure comprises 345 residues: D-fructose 1,6-bisphosphatase class 2/sedoheptulose 1,7-bisphosphatase (345 aa).

Residues D33, E57, D97, and E100 each coordinate Mn(2+). Substrate is bound by residues 100-102 (EGT), Y131, 176-178 (RPR), and 198-200 (DGD). A Mn(2+)-binding site is contributed by E225.

The protein belongs to the FBPase class 2 family. As to quaternary structure, homotetramer. Mn(2+) serves as cofactor.

The enzyme catalyses beta-D-fructose 1,6-bisphosphate + H2O = beta-D-fructose 6-phosphate + phosphate. The catalysed reaction is D-sedoheptulose 1,7-bisphosphate + H2O = D-sedoheptulose 7-phosphate + phosphate. Its pathway is carbohydrate biosynthesis; Calvin cycle. Its function is as follows. Catalyzes the hydrolysis of fructose 1,6-bisphosphate (Fru 1,6-P2) and sedoheptulose 1,7-bisphosphate (Sed 1,7-P2) to fructose 6-phosphate and sedoheptulose 7-phosphate, respectively. This Synechocystis sp. (strain ATCC 27184 / PCC 6803 / Kazusa) protein is D-fructose 1,6-bisphosphatase class 2/sedoheptulose 1,7-bisphosphatase.